The chain runs to 818 residues: LisH domain-containing protein ARMC9 (818 aa).

The 33-residue stretch at 7-39 (HESELLGLVKEYLDFAEFEDTLKTFSKECKIKG) folds into the LisH domain. Residues 204–230 (QSNKEILQQLHQQLVEAERRSVTYLKR) adopt a coiled-coil conformation. Phosphoserine is present on Ser582. Disordered stretches follow at residues 642 to 755 (VQWS…TTRE) and 790 to 818 (SSCG…SHRK). A compositionally biased stretch (low complexity) spans 701–711 (STPESCVSSSS). Polar residues predominate over residues 792–818 (CGPQQASRPGSTASSTRGLPSSQSHRK).

Interacts with TOGARAM1, CCDC66, CEP104, CSPP1 and CEP290. Interacts with NDUFAF2. Strongly expressed in most melanomas and melanocytes. Weakly expressed in the testis.

Its subcellular location is the cytoplasm. It localises to the cytoskeleton. The protein resides in the cilium basal body. The protein localises to the cell projection. It is found in the cilium. Its subcellular location is the microtubule organizing center. It localises to the centrosome. The protein resides in the centriole. Its function is as follows. Involved in ciliogenesis. It is required for appropriate acetylation and polyglutamylation of ciliary microtubules, and regulation of cilium length. Acts as a positive regulator of hedgehog (Hh)signaling. May participate in the trafficking and/or retention of GLI2 and GLI3 proteins at the ciliary tip. In Homo sapiens (Human), this protein is LisH domain-containing protein ARMC9.